We begin with the raw amino-acid sequence, 379 residues long: 1-deoxy-D-xylulose 5-phosphate reductoisomerase (379 aa).

NADPH is bound by residues Thr-10, Gly-11, Ser-12, Val-13, and Asn-121. Position 122 (Lys-122) interacts with 1-deoxy-D-xylulose 5-phosphate. Glu-123 serves as a coordination point for NADPH. Asp-147 lines the Mn(2+) pocket. Positions 148, 149, 173, and 196 each coordinate 1-deoxy-D-xylulose 5-phosphate. Glu-149 contacts Mn(2+). Gly-202 is an NADPH binding site. Residues Ser-209, Asn-214, Lys-215, and Glu-218 each coordinate 1-deoxy-D-xylulose 5-phosphate. Mn(2+) is bound at residue Glu-218.

It belongs to the DXR family. Mg(2+) serves as cofactor. It depends on Mn(2+) as a cofactor.

It catalyses the reaction 2-C-methyl-D-erythritol 4-phosphate + NADP(+) = 1-deoxy-D-xylulose 5-phosphate + NADPH + H(+). It participates in isoprenoid biosynthesis; isopentenyl diphosphate biosynthesis via DXP pathway; isopentenyl diphosphate from 1-deoxy-D-xylulose 5-phosphate: step 1/6. Functionally, catalyzes the NADPH-dependent rearrangement and reduction of 1-deoxy-D-xylulose-5-phosphate (DXP) to 2-C-methyl-D-erythritol 4-phosphate (MEP). The protein is 1-deoxy-D-xylulose 5-phosphate reductoisomerase of Chlamydia abortus (strain DSM 27085 / S26/3) (Chlamydophila abortus).